The primary structure comprises 701 residues: Polyribonucleotide nucleotidyltransferase (701 aa).

Residues aspartate 487 and aspartate 493 each coordinate Mg(2+). A KH domain is found at 554 to 613; that stretch reads PTMLQMKIDSDKIRDVIGKGGATIRAICEETKASIDIEDDGSVKIYGETKEAAEAAKQRV. In terms of domain architecture, S1 motif spans 623 to 691; it reads GKIYVGKVER…NRGRIKLSIK (69 aa).

The protein belongs to the polyribonucleotide nucleotidyltransferase family. In terms of assembly, component of the RNA degradosome, which is a multiprotein complex involved in RNA processing and mRNA degradation. It depends on Mg(2+) as a cofactor.

The protein resides in the cytoplasm. It carries out the reaction RNA(n+1) + phosphate = RNA(n) + a ribonucleoside 5'-diphosphate. Its function is as follows. Involved in mRNA degradation. Catalyzes the phosphorolysis of single-stranded polyribonucleotides processively in the 3'- to 5'-direction. The protein is Polyribonucleotide nucleotidyltransferase of Pseudomonas paraeruginosa (strain DSM 24068 / PA7) (Pseudomonas aeruginosa (strain PA7)).